The primary structure comprises 115 residues: Chaperone protein PrsD (115 aa).

The protein belongs to the periplasmic pilus chaperone family.

It is found in the periplasm. In terms of biological role, mediates assembly of pili by forming soluble multimeric complexes with pili subunits as an intermediate step in the assembly process. This is Chaperone protein PrsD (prsD) from Escherichia coli.